The chain runs to 488 residues: Probable indole-3-acetic acid-amido synthetase GH3.6 (488 aa).

Belongs to the IAA-amido conjugating enzyme family. Expressed in roots and callus.

In terms of biological role, may catalyze the synthesis of indole-3-acetic acid (IAA)-amino acid conjugates, providing a mechanism for the plant to cope with the presence of excess auxin. The sequence is that of Probable indole-3-acetic acid-amido synthetase GH3.6 (GH3.6) from Oryza sativa subsp. japonica (Rice).